The primary structure comprises 516 residues: Melianol synthase CYP71BQ17 (516 aa).

A helical membrane pass occupies residues 14–34; that stretch reads MPHLPSLPVSLSFLLFFLMLV. Position 454 (C454) interacts with heme.

This sequence belongs to the cytochrome P450 family. Heme is required as a cofactor. As to expression, mainly expressed in roots and, to a lesser extent, in stems and old leaves.

The protein localises to the membrane. It carries out the reaction dihydroniloticin + 2 reduced [NADPH--hemoprotein reductase] + 2 O2 = melianol + 2 oxidized [NADPH--hemoprotein reductase] + 3 H2O + 2 H(+). It functions in the pathway secondary metabolite biosynthesis; terpenoid biosynthesis. Monooxygenase involved in the biosynthesis of quassinoids triterpene natural products such as ailanthone, chaparrinone, glaucarubinone and amarolide, allelopathic degraded triterpene lactones inhibiting the growth of other plants, and possessing antimalarial, antifeedant, insecticidal, anti-inflammatory and anticancer activities. Catalyzes the conversion of dihydroniloticin to the protolimonoid melianol. This chain is Melianol synthase CYP71BQ17, found in Ailanthus altissima (Tree-of-heaven).